The sequence spans 212 residues: 3-isopropylmalate dehydratase small subunit 2 (212 aa).

It belongs to the LeuD family. LeuD type 1 subfamily. In terms of assembly, heterodimer of LeuC and LeuD.

The catalysed reaction is (2R,3S)-3-isopropylmalate = (2S)-2-isopropylmalate. It functions in the pathway amino-acid biosynthesis; L-leucine biosynthesis; L-leucine from 3-methyl-2-oxobutanoate: step 2/4. Its function is as follows. Catalyzes the isomerization between 2-isopropylmalate and 3-isopropylmalate, via the formation of 2-isopropylmaleate. The sequence is that of 3-isopropylmalate dehydratase small subunit 2 from Chromobacterium violaceum (strain ATCC 12472 / DSM 30191 / JCM 1249 / CCUG 213 / NBRC 12614 / NCIMB 9131 / NCTC 9757 / MK).